The following is a 916-amino-acid chain: Pertactin autotransporter (916 aa).

Residues 1–37 form the signal peptide; it reads MNMSLSRIVKAAPLRRTTLAMALGALGALGAAPAAHA. A Cell attachment site; involved in adhesion to various eukaryotic cell lines motif is present at residues 263–265; it reads RGD. 3 repeat units span residues 269–273, 274–278, and 279–283. Residues 269–288 form a 4 X 5 AA tandem repeats of G-G-A-V-P region; sequence GGAVPGGAVPGGAVPGGFGP. The stretch at 284 to 288 is one 4; approximate repeat; the sequence is GGFGP. A disordered region spans residues 564-613; the sequence is SLVGAKAPPAPKPAPQPGPQPGPQPPQPPQPPQRQPEAPAPQPPAGRELS. Residues 571–607 show a composition bias toward pro residues; sequence PPAPKPAPQPGPQPGPQPPQPPQPPQRQPEAPAPQPP. A 6 X 3 AA repeats of P-Q-P region spans residues 578–606; that stretch reads PQPGPQPGPQPPQPPQPPQRQPEAPAPQP. The Autotransporter domain maps to 648-916; the sequence is LNPDAGGAWG…TFHAGYRYSW (269 aa). The Cell attachment site motif lies at 706 to 708; it reads RGD.

As to quaternary structure, monomer.

The protein resides in the periplasm. It is found in the secreted. The protein localises to the cell surface. It localises to the cell outer membrane. Its function is as follows. Agglutinogen that binds to eukaryotic cells; a process mediated by the R-G-D sequence. Pertactin may have a role in bacterial adhesion, and thus play a role in virulence. May contribute to the disease state of whooping cough. This Bordetella bronchiseptica (strain ATCC BAA-588 / NCTC 13252 / RB50) (Alcaligenes bronchisepticus) protein is Pertactin autotransporter (prn).